Reading from the N-terminus, the 196-residue chain is Deoxyribose-phosphate aldolase (196 aa).

Residue Asp91 is the Proton donor/acceptor of the active site. Lys153 (schiff-base intermediate with acetaldehyde) is an active-site residue. Residue Lys182 is the Proton donor/acceptor of the active site.

Belongs to the DeoC/FbaB aldolase family. DeoC type 1 subfamily.

It is found in the cytoplasm. The catalysed reaction is 2-deoxy-D-ribose 5-phosphate = D-glyceraldehyde 3-phosphate + acetaldehyde. It participates in carbohydrate degradation; 2-deoxy-D-ribose 1-phosphate degradation; D-glyceraldehyde 3-phosphate and acetaldehyde from 2-deoxy-alpha-D-ribose 1-phosphate: step 2/2. In terms of biological role, catalyzes a reversible aldol reaction between acetaldehyde and D-glyceraldehyde 3-phosphate to generate 2-deoxy-D-ribose 5-phosphate. This Mycoplasma mycoides subsp. mycoides SC (strain CCUG 32753 / NCTC 10114 / PG1) protein is Deoxyribose-phosphate aldolase.